The following is an 89-amino-acid chain: Large ribosomal subunit protein bL27 (89 aa).

Residues 1-20 (MAHKKAGGSSRNGRDSAGRR) form a disordered region.

This sequence belongs to the bacterial ribosomal protein bL27 family.

In Zymomonas mobilis subsp. mobilis (strain ATCC 31821 / ZM4 / CP4), this protein is Large ribosomal subunit protein bL27.